A 336-amino-acid polypeptide reads, in one-letter code: Holliday junction branch migration complex subunit RuvB (336 aa).

A large ATPase domain (RuvB-L) region spans residues 1–182 (MKERIVNLET…FGMSFRMQFY (182 aa)). ATP-binding positions include leucine 21, arginine 22, glycine 63, lysine 66, threonine 67, serine 68, 129–131 (EDF), arginine 172, tyrosine 182, and arginine 219. Position 67 (threonine 67) interacts with Mg(2+). The small ATPAse domain (RuvB-S) stretch occupies residues 183–253 (SPSELSLIIK…ITLHALNELG (71 aa)). The head domain (RuvB-H) stretch occupies residues 256 to 336 (ELGFDEADLA…IPTLNPQTLF (81 aa)). Residues arginine 310 and arginine 315 each coordinate DNA.

It belongs to the RuvB family. As to quaternary structure, homohexamer. Forms an RuvA(8)-RuvB(12)-Holliday junction (HJ) complex. HJ DNA is sandwiched between 2 RuvA tetramers; dsDNA enters through RuvA and exits via RuvB. An RuvB hexamer assembles on each DNA strand where it exits the tetramer. Each RuvB hexamer is contacted by two RuvA subunits (via domain III) on 2 adjacent RuvB subunits; this complex drives branch migration. In the full resolvosome a probable DNA-RuvA(4)-RuvB(12)-RuvC(2) complex forms which resolves the HJ.

The protein resides in the cytoplasm. The catalysed reaction is ATP + H2O = ADP + phosphate + H(+). In terms of biological role, the RuvA-RuvB-RuvC complex processes Holliday junction (HJ) DNA during genetic recombination and DNA repair, while the RuvA-RuvB complex plays an important role in the rescue of blocked DNA replication forks via replication fork reversal (RFR). RuvA specifically binds to HJ cruciform DNA, conferring on it an open structure. The RuvB hexamer acts as an ATP-dependent pump, pulling dsDNA into and through the RuvAB complex. RuvB forms 2 homohexamers on either side of HJ DNA bound by 1 or 2 RuvA tetramers; 4 subunits per hexamer contact DNA at a time. Coordinated motions by a converter formed by DNA-disengaged RuvB subunits stimulates ATP hydrolysis and nucleotide exchange. Immobilization of the converter enables RuvB to convert the ATP-contained energy into a lever motion, pulling 2 nucleotides of DNA out of the RuvA tetramer per ATP hydrolyzed, thus driving DNA branch migration. The RuvB motors rotate together with the DNA substrate, which together with the progressing nucleotide cycle form the mechanistic basis for DNA recombination by continuous HJ branch migration. Branch migration allows RuvC to scan DNA until it finds its consensus sequence, where it cleaves and resolves cruciform DNA. This chain is Holliday junction branch migration complex subunit RuvB, found in Helicobacter pylori (strain J99 / ATCC 700824) (Campylobacter pylori J99).